Reading from the N-terminus, the 129-residue chain is Small ribosomal subunit protein uS11 (129 aa).

The protein belongs to the universal ribosomal protein uS11 family. In terms of assembly, part of the 30S ribosomal subunit. Interacts with proteins S7 and S18. Binds to IF-3.

Functionally, located on the platform of the 30S subunit, it bridges several disparate RNA helices of the 16S rRNA. Forms part of the Shine-Dalgarno cleft in the 70S ribosome. This Rhodopseudomonas palustris (strain BisB5) protein is Small ribosomal subunit protein uS11.